The following is a 505-amino-acid chain: ATP synthase subunit alpha (505 aa).

170–177 (GDRQTGKS) contributes to the ATP binding site.

Belongs to the ATPase alpha/beta chains family. In terms of assembly, F-type ATPases have 2 components, CF(1) - the catalytic core - and CF(0) - the membrane proton channel. CF(1) has five subunits: alpha(3), beta(3), gamma(1), delta(1), epsilon(1). CF(0) has four main subunits: a(1), b(1), b'(1) and c(9-12).

Its subcellular location is the cellular thylakoid membrane. It carries out the reaction ATP + H2O + 4 H(+)(in) = ADP + phosphate + 5 H(+)(out). Functionally, produces ATP from ADP in the presence of a proton gradient across the membrane. The alpha chain is a regulatory subunit. The polypeptide is ATP synthase subunit alpha (Prochlorococcus marinus (strain MIT 9312)).